The chain runs to 293 residues: Nucleotide-binding protein DvMF_0424 (293 aa).

An ATP-binding site is contributed by 13–20 (GLSGAGKS). 65–68 (DLRE) contributes to the GTP binding site.

The protein belongs to the RapZ-like family.

Displays ATPase and GTPase activities. This is Nucleotide-binding protein DvMF_0424 from Nitratidesulfovibrio vulgaris (strain DSM 19637 / Miyazaki F) (Desulfovibrio vulgaris).